The sequence spans 510 residues: Cytochrome P450 monooxygenase AFLA_114810 (510 aa).

An N-terminal signal peptide occupies residues 1–17; it reads MLILLGLLCLYTGLYVA. Cys-444 lines the heme pocket.

Belongs to the cytochrome P450 family. Heme serves as cofactor.

It participates in secondary metabolite biosynthesis. Functionally, cytochrome P450 monooxygenase; part of the gene cluster 41 that mediates the biosynthesis of an extracellular and diffusible metabolite that is able to stimulate colony sclerotial production. This Aspergillus flavus (strain ATCC 200026 / FGSC A1120 / IAM 13836 / NRRL 3357 / JCM 12722 / SRRC 167) protein is Cytochrome P450 monooxygenase AFLA_114810.